Here is a 295-residue protein sequence, read N- to C-terminus: Elongation factor Ts (295 aa).

An involved in Mg(2+) ion dislocation from EF-Tu region spans residues 79–82 (TDFV).

This sequence belongs to the EF-Ts family.

Its subcellular location is the cytoplasm. Associates with the EF-Tu.GDP complex and induces the exchange of GDP to GTP. It remains bound to the aminoacyl-tRNA.EF-Tu.GTP complex up to the GTP hydrolysis stage on the ribosome. This Bacillus anthracis (strain A0248) protein is Elongation factor Ts.